A 259-amino-acid chain; its full sequence is Snake venom serine proteinase 2 (259 aa).

The first 18 residues, 1–18, serve as a signal peptide directing secretion; it reads MVLIRVLANLLILQLSYA. Residues 19–24 constitute a propeptide that is removed on maturation; it reads QKSSEL. The region spanning 25 to 250 is the Peptidase S1 domain; that stretch reads IFGGRPCNRN…HLDWIQSIIA (226 aa). 6 disulfide bridges follow: Cys-31/Cys-162, Cys-49/Cys-65, Cys-97/Cys-257, Cys-141/Cys-211, Cys-173/Cys-190, and Cys-201/Cys-226. Active-site charge relay system residues include His-64 and Asp-109. Ser-205 acts as the Charge relay system in catalysis.

The protein belongs to the peptidase S1 family. Snake venom subfamily. As to quaternary structure, monomer. In terms of tissue distribution, expressed by the venom gland.

Its subcellular location is the secreted. Functionally, snake venom serine protease that may act in the hemostasis system of the prey. This chain is Snake venom serine proteinase 2, found in Crotalus adamanteus (Eastern diamondback rattlesnake).